The following is a 199-amino-acid chain: Recombination protein RecR (199 aa).

Residues 58-73 form a C4-type zinc finger; sequence CSVCNNITDVDPCVFC. Residues 81-176 form the Toprim domain; the sequence is RLVCVVEEPT…RLTRIATGVP (96 aa).

It belongs to the RecR family.

Its function is as follows. May play a role in DNA repair. It seems to be involved in an RecBC-independent recombinational process of DNA repair. It may act with RecF and RecO. This chain is Recombination protein RecR, found in Acidobacterium capsulatum (strain ATCC 51196 / DSM 11244 / BCRC 80197 / JCM 7670 / NBRC 15755 / NCIMB 13165 / 161).